The following is a 165-amino-acid chain: Large ribosomal subunit protein uL5 (165 aa).

The protein belongs to the universal ribosomal protein uL5 family. As to quaternary structure, part of the 50S ribosomal subunit; contacts the 5S rRNA and probably tRNA. Forms a bridge to the 30S subunit in the 70S ribosome.

In terms of biological role, this is one of the proteins that bind and probably mediate the attachment of the 5S RNA into the large ribosomal subunit, where it forms part of the central protuberance. In the 70S ribosome it contacts protein S13 of the 30S subunit (bridge B1b), connecting the 2 subunits; this bridge is implicated in subunit movement. May contact the P site tRNA; the 5S rRNA and some of its associated proteins might help stabilize positioning of ribosome-bound tRNAs. This chain is Large ribosomal subunit protein uL5, found in Methanoregula boonei (strain DSM 21154 / JCM 14090 / 6A8).